A 181-amino-acid chain; its full sequence is FMN reductase (NADH) RutF (181 aa).

Belongs to the non-flavoprotein flavin reductase family. RutF subfamily.

The catalysed reaction is FMNH2 + NAD(+) = FMN + NADH + 2 H(+). Catalyzes the reduction of FMN to FMNH2 which is used to reduce pyrimidine by RutA via the Rut pathway. The sequence is that of FMN reductase (NADH) RutF from Ancylobacter novellus (strain ATCC 8093 / DSM 506 / JCM 20403 / CCM 1077 / IAM 12100 / NBRC 12443 / NCIMB 10456) (Starkeya novella).